The chain runs to 136 residues: Large ribosomal subunit protein eL27 (136 aa).

It belongs to the eukaryotic ribosomal protein eL27 family.

The polypeptide is Large ribosomal subunit protein eL27 (RPL27) (Candida albicans (Yeast)).